Consider the following 354-residue polypeptide: Sulfate/thiosulfate import ATP-binding protein CysA (354 aa).

Residues 3 to 237 (IEVRGLSKRF…PATPFVYGFL (235 aa)) enclose the ABC transporter domain. 35–42 (GPSGCGKT) serves as a coordination point for ATP.

This sequence belongs to the ABC transporter superfamily. Sulfate/tungstate importer (TC 3.A.1.6) family. In terms of assembly, the complex is composed of two ATP-binding proteins (CysA), two transmembrane proteins (CysT and CysW) and a solute-binding protein (CysP).

The protein resides in the cell inner membrane. It catalyses the reaction sulfate(out) + ATP + H2O = sulfate(in) + ADP + phosphate + H(+). The enzyme catalyses thiosulfate(out) + ATP + H2O = thiosulfate(in) + ADP + phosphate + H(+). Functionally, part of the ABC transporter complex CysAWTP involved in sulfate/thiosulfate import. Responsible for energy coupling to the transport system. The sequence is that of Sulfate/thiosulfate import ATP-binding protein CysA from Bordetella parapertussis (strain 12822 / ATCC BAA-587 / NCTC 13253).